A 216-amino-acid chain; its full sequence is Ribosomal RNA small subunit methyltransferase G (216 aa).

S-adenosyl-L-methionine-binding positions include Gly-73, Leu-78, 124 to 125 (AE), and Arg-139.

Belongs to the methyltransferase superfamily. RNA methyltransferase RsmG family.

It localises to the cytoplasm. In terms of biological role, specifically methylates the N7 position of guanine in position 518 of 16S rRNA. This chain is Ribosomal RNA small subunit methyltransferase G, found in Pseudarthrobacter chlorophenolicus (strain ATCC 700700 / DSM 12829 / CIP 107037 / JCM 12360 / KCTC 9906 / NCIMB 13794 / A6) (Arthrobacter chlorophenolicus).